The chain runs to 142 residues: ATP synthase epsilon chain (142 aa).

It belongs to the ATPase epsilon chain family. As to quaternary structure, F-type ATPases have 2 components, CF(1) - the catalytic core - and CF(0) - the membrane proton channel. CF(1) has five subunits: alpha(3), beta(3), gamma(1), delta(1), epsilon(1). CF(0) has three main subunits: a, b and c.

Its subcellular location is the cell inner membrane. Produces ATP from ADP in the presence of a proton gradient across the membrane. The polypeptide is ATP synthase epsilon chain (Shewanella frigidimarina (strain NCIMB 400)).